We begin with the raw amino-acid sequence, 138 residues long: Spermatid nuclear transition protein 4 (138 aa).

Residues 1–11 (AKVSRKPREPR) are compositionally biased toward basic and acidic residues. Residues 1–138 (AKVSRKPREP…QGVTRRGRRY (138 aa)) form a disordered region. Residue Ser4 is modified to Phosphoserine; by PKC. The Nuclear localization signal signature appears at 5-23 (RKPREPRTAVTQSTRRIKR). 3 stretches are compositionally biased toward basic residues: residues 19–34 (RRIK…RSRG), 43–57 (MKIK…RRKI), and 65–74 (KKAKKARKHF). Position 26 is a phosphothreonine; by PKA (Thr26). The short motif at 54-72 (RRKIQTSAGQPKKAKKARK) is the Nuclear localization signal element. Residues 86–101 (NKKTNQNKRQNQNKRQ) are compositionally biased toward low complexity. The span at 120-131 (PTTSCKWCSQGV) shows a compositional bias: polar residues.

It is found in the nucleus. Its subcellular location is the chromosome. Functionally, involved in nuclear basic protein transition: histones are replaced by spermatid specific proteins which are themselves replaced by protamines in late spermatids. The sequence is that of Spermatid nuclear transition protein 4 (TNP4) from Sus scrofa (Pig).